Reading from the N-terminus, the 378-residue chain is Ribosomal RNA large subunit methyltransferase G (378 aa).

This sequence belongs to the methyltransferase superfamily. RlmG family.

The protein resides in the cytoplasm. The catalysed reaction is guanosine(1835) in 23S rRNA + S-adenosyl-L-methionine = N(2)-methylguanosine(1835) in 23S rRNA + S-adenosyl-L-homocysteine + H(+). In terms of biological role, specifically methylates the guanine in position 1835 (m2G1835) of 23S rRNA. In Shewanella putrefaciens (strain CN-32 / ATCC BAA-453), this protein is Ribosomal RNA large subunit methyltransferase G.